The primary structure comprises 67 residues: DNA-directed RNA polymerase subunit omega (67 aa).

This sequence belongs to the RNA polymerase subunit omega family. As to quaternary structure, the RNAP catalytic core consists of 2 alpha, 1 beta, 1 beta' and 1 omega subunit. When a sigma factor is associated with the core the holoenzyme is formed, which can initiate transcription.

The enzyme catalyses RNA(n) + a ribonucleoside 5'-triphosphate = RNA(n+1) + diphosphate. Promotes RNA polymerase assembly. Latches the N- and C-terminal regions of the beta' subunit thereby facilitating its interaction with the beta and alpha subunits. In Polynucleobacter asymbioticus (strain DSM 18221 / CIP 109841 / QLW-P1DMWA-1) (Polynucleobacter necessarius subsp. asymbioticus), this protein is DNA-directed RNA polymerase subunit omega.